A 329-amino-acid chain; its full sequence is Prostaglandin reductase 1 (329 aa).

Residue T18 is modified to Phosphothreonine. S20 carries the post-translational modification Phosphoserine. NADP(+) is bound by residues 152 to 155 (GAVG), K178, Y193, N217, 239 to 245 (CGAISVY), 270 to 272 (FIV), and N321. At K178 the chain carries N6-(2-hydroxyisobutyryl)lysine; alternate. K178 carries the post-translational modification N6-acetyllysine; alternate.

Belongs to the NADP-dependent oxidoreductase L4BD family. In terms of assembly, monomer or homodimer. As to expression, detected in small intestine, kidney, liver, spleen and stomach (at protein level). Detected in small intestine, kidney and liver.

The protein localises to the cytoplasm. It carries out the reaction 13,14-dihydro-15-oxo-prostaglandin E1 + NADP(+) = 15-oxoprostaglandin E1 + NADPH + H(+). It catalyses the reaction 13,14-dihydro-15-oxo-prostaglandin E2 + NAD(+) = 15-oxoprostaglandin E2 + NADH + H(+). The catalysed reaction is 13,14-dihydro-15-oxo-prostaglandin F1alpha + NADP(+) = 15-oxoprostaglandin F1alpha + NADPH + H(+). The enzyme catalyses 13,14-dihydro-15-oxo-PGF2alpha + NADP(+) = 15-oxoprostaglandin F2alpha + NADPH + H(+). It carries out the reaction leukotriene B4 + NADP(+) = 12-oxo-leukotriene B4 + NADPH + H(+). It catalyses the reaction 20-hydroxy-leukotriene B4 + NADP(+) = 12-oxo-20-hydroxy-leukotriene B4 + NADPH + H(+). The catalysed reaction is 6-trans-leukotriene B4 + NADP(+) = 12-oxo-(5S)-hydroxy-(6E,8E,10E,14Z)-eicosatetraenoate + NADPH + H(+). The enzyme catalyses (5S,12S)-dihydroxy-(6E,10E,12E,14Z)-eicosatetraenoate + NADP(+) = 12-oxo-(5S)-hydroxy-(6E,8E,10E,14Z)-eicosatetraenoate + NADPH + H(+). It carries out the reaction an n-alkanal + NADP(+) = an alk-2-enal + NADPH + H(+). It catalyses the reaction hexanal + NADP(+) = (E)-hex-2-enal + NADPH + H(+). The catalysed reaction is octanal + NADP(+) = (2E)-octenal + NADPH + H(+). The enzyme catalyses decanal + NADP(+) = (2E)-decenal + NADPH + H(+). It carries out the reaction dodecanal + NADP(+) = (2E)-dodecenal + NADPH + H(+). It catalyses the reaction 4-hydroxynonanal + NADP(+) = (E)-4-hydroxynon-2-enal + NADPH + H(+). The catalysed reaction is pentan-2-one + NADP(+) = (E)-pent-3-en-2-one + NADPH + H(+). The enzyme catalyses nonan-2-one + NADP(+) = (3E)-nonen-2-one + NADPH + H(+). Its function is as follows. NAD(P)H-dependent oxidoreductase involved in metabolic inactivation of pro- and anti-inflammatory eicosanoids: prostaglandins (PG), leukotrienes (LT) and lipoxins (LX). Catalyzes with high efficiency the reduction of the 13,14 double bond of 15-oxoPGs, including 15-oxo-PGE1, 15-oxo-PGE2, 15-oxo-PGF1-alpha and 15-oxo-PGF2-alpha. Catalyzes with lower efficiency the oxidation of the hydroxyl group at C12 of LTB4 and its derivatives, converting them into biologically less active 12-oxo-LTB4 metabolites. Reduces 15-oxo-LXA4 to 13,14 dihydro-15-oxo-LXA4, enhancing neutrophil recruitment at the inflammatory site. Plays a role in metabolic detoxification of alkenals and ketones. Reduces alpha,beta-unsaturated alkenals and ketones, particularly those with medium-chain length, showing highest affinity toward (2E)-decenal and (3E)-3-nonen-2-one. May inactivate 4-hydroxy-2-nonenal, a cytotoxic lipid constituent of oxidized low-density lipoprotein particles. This is Prostaglandin reductase 1 (Ptgr1) from Cavia porcellus (Guinea pig).